We begin with the raw amino-acid sequence, 261 residues long: Thiamine thiazole synthase (261 aa).

Residues Ser-33, 52-53, Gly-60, Val-124, and 152-154 contribute to the NAD(+) site; these read ER and HVD. Fe cation contacts are provided by Asp-154 and His-169. Met-219 provides a ligand contact to NAD(+). Residue Arg-229 participates in glycine binding.

Belongs to the THI4 family. Homooctamer; tetramer of dimers. Requires Fe(2+) as cofactor.

The enzyme catalyses hydrogen sulfide + glycine + NAD(+) = ADP-5-ethyl-4-methylthiazole-2-carboxylate + nicotinamide + 3 H2O + H(+). The protein operates within cofactor biosynthesis; thiamine diphosphate biosynthesis. Its function is as follows. Involved in the biosynthesis of the thiazole moiety of thiamine. Catalyzes the conversion of NAD and glycine to adenosine diphosphate 5-(2-hydroxyethyl)-4-methylthiazole-2-carboxylate (ADT), an adenylated thiazole intermediate, using free sulfide as a source of sulfur. The protein is Thiamine thiazole synthase of Pyrobaculum arsenaticum (strain DSM 13514 / JCM 11321 / PZ6).